The chain runs to 222 residues: uncharacterized protein (222 aa).

Residues 8-77 form the HTH gntR-type domain; that stretch reads AKKGQIIYRY…GNAGYFVAKN (70 aa).

This is an uncharacterized protein from Mycoplasma pneumoniae (strain ATCC 29342 / M129 / Subtype 1) (Mycoplasmoides pneumoniae).